Here is a 425-residue protein sequence, read N- to C-terminus: Imidazolonepropionase (425 aa).

Fe(3+)-binding residues include histidine 82 and histidine 84. Zn(2+) contacts are provided by histidine 82 and histidine 84. 4-imidazolone-5-propanoate is bound by residues arginine 91, tyrosine 154, and histidine 187. Position 154 (tyrosine 154) interacts with N-formimidoyl-L-glutamate. Histidine 253 is a Fe(3+) binding site. Histidine 253 contacts Zn(2+). Glutamate 256 contributes to the 4-imidazolone-5-propanoate binding site. Aspartate 328 contributes to the Fe(3+) binding site. Aspartate 328 is a Zn(2+) binding site. 2 residues coordinate N-formimidoyl-L-glutamate: asparagine 330 and glycine 332. Serine 333 is a 4-imidazolone-5-propanoate binding site.

Belongs to the metallo-dependent hydrolases superfamily. HutI family. Zn(2+) is required as a cofactor. Fe(3+) serves as cofactor.

The protein resides in the cytoplasm. It carries out the reaction 4-imidazolone-5-propanoate + H2O = N-formimidoyl-L-glutamate. The protein operates within amino-acid degradation; L-histidine degradation into L-glutamate; N-formimidoyl-L-glutamate from L-histidine: step 3/3. Functionally, catalyzes the hydrolytic cleavage of the carbon-nitrogen bond in imidazolone-5-propanoate to yield N-formimidoyl-L-glutamate. It is the third step in the universal histidine degradation pathway. The sequence is that of Imidazolonepropionase from Symbiobacterium thermophilum (strain DSM 24528 / JCM 14929 / IAM 14863 / T).